Consider the following 518-residue polypeptide: Protein FAM98A (518 aa).

Disordered regions lie at residues 297 to 415 (VLMG…GHSS) and 434 to 518 (GSGY…HYTS). Basic and acidic residues predominate over residues 302-311 (VPDRGGRPNE). Composition is skewed to gly residues over residues 349 to 364 (GGRG…GGRG), 383 to 396 (WTDG…GYQD), and 405 to 415 (QPGGYHGGHSS). A compositionally biased stretch (basic and acidic residues) spans 447-459 (RYQDGGHHGDRGG). Positions 460-484 (GRGGRGGRGGRGGRAGQGGGWGGRG) are enriched in gly residues. Residues 488 to 504 (YHQGGQFEQHFQHGGYQ) are compositionally biased toward low complexity. Positions 505–518 (YNHSGFGQGRHYTS) are enriched in polar residues.

This sequence belongs to the FAM98 family. Interacts (via N- and C-terminus) with DDX1. Interacts (via N- and C-terminus) with C14orf166. Interacts with FAM98B. Interacts with PLEKHM1 (via N- and C-terminus). As to expression, expressed strongly in colorectal cancer cells. Expressed strongly in colorectal cancer tissues compared to wild-type colon samples (at protein level). Expressed strongly in colorectal cancer tissues compared to wild-type colon samples.

Its function is as follows. Positively stimulates PRMT1-induced protein arginine methylation. Involved in skeletal homeostasis. Positively regulates lysosome peripheral distribution and ruffled border formation in osteoclasts. The chain is Protein FAM98A from Homo sapiens (Human).